A 724-amino-acid chain; its full sequence is WW domain-containing protein ZK1098.1 (724 aa).

2 WW domains span residues proline 78–valine 111 and glutamine 123–glycine 156. FF domains follow at residues lysine 224–glutamine 282, isoleucine 295–phenylalanine 349, arginine 353–glutamine 422, glutamine 442–aspartate 502, tyrosine 507–lysine 562, and lysine 578–glycine 632. The interval phenylalanine 626–aspartate 724 is disordered. The span at lysine 630–glycine 639 shows a compositional bias: polar residues. Residues lysine 645–lysine 657 show a composition bias toward basic residues. Over residues serine 681 to glycine 692 the composition is skewed to basic and acidic residues. The span at lysine 693–proline 703 shows a compositional bias: basic residues.

In Caenorhabditis elegans, this protein is WW domain-containing protein ZK1098.1.